A 1356-amino-acid chain; its full sequence is DNA-directed RNA polymerase subunit beta (1356 aa).

This sequence belongs to the RNA polymerase beta chain family. In terms of assembly, the RNAP catalytic core consists of 2 alpha, 1 beta, 1 beta' and 1 omega subunit. When a sigma factor is associated with the core the holoenzyme is formed, which can initiate transcription.

It carries out the reaction RNA(n) + a ribonucleoside 5'-triphosphate = RNA(n+1) + diphosphate. Functionally, DNA-dependent RNA polymerase catalyzes the transcription of DNA into RNA using the four ribonucleoside triphosphates as substrates. The sequence is that of DNA-directed RNA polymerase subunit beta from Stutzerimonas stutzeri (strain A1501) (Pseudomonas stutzeri).